The chain runs to 104 residues: uncharacterized protein (104 aa).

Residues 77–98 (IAAVRANIIICACFFYLFCYCS) traverse the membrane as a helical segment.

It is found in the membrane. This is an uncharacterized protein from Saccharomyces cerevisiae (strain ATCC 204508 / S288c) (Baker's yeast).